The chain runs to 330 residues: D-alanine--D-alanine ligase (330 aa).

The ATP-grasp domain occupies 120–326; that stretch reads KLWLSALDIP…FKQFLEGIIR (207 aa). Residue 150-205 participates in ATP binding; that stretch reads AFRNWGAVFVKAASQGSSVGCYKVTDAAKLSEAVNAAFGYSDQVLVEKAVRPRELE. Mg(2+) contacts are provided by Asp-280, Glu-293, and Asn-295.

The protein belongs to the D-alanine--D-alanine ligase family. Mg(2+) is required as a cofactor. It depends on Mn(2+) as a cofactor.

The protein resides in the cytoplasm. It catalyses the reaction 2 D-alanine + ATP = D-alanyl-D-alanine + ADP + phosphate + H(+). It functions in the pathway cell wall biogenesis; peptidoglycan biosynthesis. Functionally, cell wall formation. This Tolumonas auensis (strain DSM 9187 / NBRC 110442 / TA 4) protein is D-alanine--D-alanine ligase.